Here is a 966-residue protein sequence, read N- to C-terminus: RNA polymerase-associated protein RapA (966 aa).

In terms of domain architecture, Helicase ATP-binding spans 163–337; that stretch reads EVGRRIAPRV…FARLHLLDPN (175 aa). An ATP-binding site is contributed by 176–183; sequence DEVGLGKT. The DEAH box motif lies at 283–286; it reads DEAH. The Helicase C-terminal domain occupies 489 to 643; sequence RVDWLINLVK…TCPMGAILHE (155 aa).

It belongs to the SNF2/RAD54 helicase family. RapA subfamily. In terms of assembly, interacts with the RNAP. Has a higher affinity for the core RNAP than for the holoenzyme. Its ATPase activity is stimulated by binding to RNAP.

Transcription regulator that activates transcription by stimulating RNA polymerase (RNAP) recycling in case of stress conditions such as supercoiled DNA or high salt concentrations. Probably acts by releasing the RNAP, when it is trapped or immobilized on tightly supercoiled DNA. Does not activate transcription on linear DNA. Probably not involved in DNA repair. This chain is RNA polymerase-associated protein RapA, found in Histophilus somni (strain 129Pt) (Haemophilus somnus).